The sequence spans 597 residues: MSAILSADDLNDFISPGVACIKPVETLPQKESQSENPYEVTKEDKIQPENLPPAQISLTDCLACSGCVTSAEAVLISLQSHAEVLNTLDAYPEFRLSNESGQDDIKTTETADSESRVFVASVSPQVRASLATTYGISEREAQCMIDQFLSGSQGLRAGGKFHNGFAWVVDTNTMREAVLALTADEVANSLTSIDPLNTLPKRPILSSACPGWICYAEKTHPFILPHLSRLKSPQALTGTLLKSVLSKALGISPTRIWHLAIMPCFDKKLEASREELTDSAWGPTPSEPHTPVRDVDCVITSRELLTLAASRGISLPRLPLKPLPRSYYSPFPDRSLDSFLFSKRSSGQTAASGTSGGYLHHVLTTFQAKNPGSQIVTQRGRNADVVEYVLMSPGGEPLLKAARYYGFRNIQNLVRKLKPARASRLPGARQSATSAGGSRRQLASRNAASAGSGTDYAYVEVMACPGGCTNGGGQVRIEDAREAASNMSVESQTEPPEAALKPTPHEQRAWLARVDEAYYSADSDSEVPATSEPASVISRDAEIHGVLQHWSEYMNIPLSKLAYTSYREVESDVGKTQTGPNDTARVVELASKIGGGW.

Cys-20, Cys-61, Cys-64, Cys-67, Cys-209, and Cys-264 together coordinate [4Fe-4S] cluster. Residues 419–447 are disordered; the sequence is PARASRLPGARQSATSAGGSRRQLASRNA. The segment covering 430-447 has biased composition (polar residues); that stretch reads QSATSAGGSRRQLASRNA. 2 residues coordinate [4Fe-4S] cluster: Cys-464 and Cys-468. The segment at 482 to 504 is disordered; it reads EAASNMSVESQTEPPEAALKPTP. A compositionally biased stretch (polar residues) spans 485–494; it reads SNMSVESQTE.

The protein belongs to the NARF family.

Functionally, component of the cytosolic Fe/S protein assembly machinery. Required for maturation of extramitochondrial Fe/S proteins. May play a role in the transfer of pre-assembled Fe/S clusters to target apoproteins. The polypeptide is Cytosolic Fe-S cluster assembly factor nar1 (nar1) (Aspergillus clavatus (strain ATCC 1007 / CBS 513.65 / DSM 816 / NCTC 3887 / NRRL 1 / QM 1276 / 107)).